Reading from the N-terminus, the 338-residue chain is RNA 3'-terminal phosphate cyclase (338 aa).

ATP is bound by residues Gln-103 and 283-287 (YLADQ). His-308 serves as the catalytic Tele-AMP-histidine intermediate.

It belongs to the RNA 3'-terminal cyclase family. Type 1 subfamily.

The protein resides in the cytoplasm. It carries out the reaction a 3'-end 3'-phospho-ribonucleotide-RNA + ATP = a 3'-end 2',3'-cyclophospho-ribonucleotide-RNA + AMP + diphosphate. In terms of biological role, catalyzes the conversion of 3'-phosphate to a 2',3'-cyclic phosphodiester at the end of RNA. The mechanism of action of the enzyme occurs in 3 steps: (A) adenylation of the enzyme by ATP; (B) transfer of adenylate to an RNA-N3'P to produce RNA-N3'PP5'A; (C) and attack of the adjacent 2'-hydroxyl on the 3'-phosphorus in the diester linkage to produce the cyclic end product. The biological role of this enzyme is unknown but it is likely to function in some aspects of cellular RNA processing. This Escherichia coli O9:H4 (strain HS) protein is RNA 3'-terminal phosphate cyclase.